We begin with the raw amino-acid sequence, 255 residues long: Pyrroloquinoline-quinone synthase (255 aa).

The protein belongs to the PqqC family.

The enzyme catalyses 6-(2-amino-2-carboxyethyl)-7,8-dioxo-1,2,3,4,7,8-hexahydroquinoline-2,4-dicarboxylate + 3 O2 = pyrroloquinoline quinone + 2 H2O2 + 2 H2O + H(+). It participates in cofactor biosynthesis; pyrroloquinoline quinone biosynthesis. Functionally, ring cyclization and eight-electron oxidation of 3a-(2-amino-2-carboxyethyl)-4,5-dioxo-4,5,6,7,8,9-hexahydroquinoline-7,9-dicarboxylic-acid to PQQ. The sequence is that of Pyrroloquinoline-quinone synthase from Cereibacter sphaeroides (strain ATCC 17023 / DSM 158 / JCM 6121 / CCUG 31486 / LMG 2827 / NBRC 12203 / NCIMB 8253 / ATH 2.4.1.) (Rhodobacter sphaeroides).